A 382-amino-acid polypeptide reads, in one-letter code: GDP-mannose 4,6 dehydratase 2 (382 aa).

NADP(+) is bound by residues 40 to 45 (GITGQD), 97 to 98 (DM), 119 to 123 (LAAQS), and Tyr134. Residue Thr166 is part of the active site. Residues Glu168 and Tyr190 each act as nucleophile in the active site. Residues Lys194, His220, and Arg225 each contribute to the NADP(+) site.

It belongs to the NAD(P)-dependent epimerase/dehydratase family. GDP-mannose 4,6-dehydratase subfamily. Requires NADP(+) as cofactor.

The catalysed reaction is GDP-alpha-D-mannose = GDP-4-dehydro-alpha-D-rhamnose + H2O. Its pathway is nucleotide-sugar biosynthesis; GDP-L-fucose biosynthesis via de novo pathway; GDP-L-fucose from GDP-alpha-D-mannose: step 1/2. Its function is as follows. Catalyzes the conversion of GDP-D-mannose to GDP-4-dehydro-6-deoxy-D-mannose. In Caenorhabditis elegans, this protein is GDP-mannose 4,6 dehydratase 2 (gmd-2).